Here is a 270-residue protein sequence, read N- to C-terminus: Putative pyruvate, phosphate dikinase regulatory protein (270 aa).

151 to 158 (GVSRTSKT) is a binding site for ADP.

This sequence belongs to the pyruvate, phosphate/water dikinase regulatory protein family. PDRP subfamily.

It catalyses the reaction N(tele)-phospho-L-histidyl/L-threonyl-[pyruvate, phosphate dikinase] + ADP = N(tele)-phospho-L-histidyl/O-phospho-L-threonyl-[pyruvate, phosphate dikinase] + AMP + H(+). It carries out the reaction N(tele)-phospho-L-histidyl/O-phospho-L-threonyl-[pyruvate, phosphate dikinase] + phosphate + H(+) = N(tele)-phospho-L-histidyl/L-threonyl-[pyruvate, phosphate dikinase] + diphosphate. In terms of biological role, bifunctional serine/threonine kinase and phosphorylase involved in the regulation of the pyruvate, phosphate dikinase (PPDK) by catalyzing its phosphorylation/dephosphorylation. The sequence is that of Putative pyruvate, phosphate dikinase regulatory protein (yqfL) from Bacillus subtilis (strain 168).